A 400-amino-acid polypeptide reads, in one-letter code: Probable vacuolar protease A (400 aa).

An N-terminal signal peptide occupies residues 1–18; the sequence is MKGSLLLAGATLLGCTSA. Positions 19 to 72 are cleaved as a propeptide — activation peptide; that stretch reads KLHSLKLKKVSLKEQLEHADIDVQIKSLGQKYMGIRPEQHEQQMFKEQTPIEVE. In terms of domain architecture, Peptidase A1 spans 87–397; that stretch reads YFSEISIGTP…DLGKGTVGLA (311 aa). Asp-105 is an active-site residue. A disulfide bond links Cys-118 and Cys-123. Asn-140 is a glycosylation site (N-linked (GlcNAc...) asparagine). Asp-289 is an active-site residue. Cys-323 and Cys-356 are disulfide-bonded. Asn-340 carries an N-linked (GlcNAc...) asparagine glycan.

Belongs to the peptidase A1 family.

Its subcellular location is the vacuole lumen. The protein localises to the secreted. It catalyses the reaction Hydrolysis of proteins with broad specificity for peptide bonds. Cleaves -Leu-Leu-|-Val-Tyr- bond in a synthetic substrate. Does not act on esters of Tyr or Arg.. Vacuolar aspartic endopeptidase which is probably also secreted and contributes to virulence. This Arthroderma benhamiae (strain ATCC MYA-4681 / CBS 112371) (Trichophyton mentagrophytes) protein is Probable vacuolar protease A (PEP2).